Here is a 158-residue protein sequence, read N- to C-terminus: Protein EOLA1 (158 aa).

The ASCH domain maps to 6–92 (LSFRQPYAGF…IAGLVDIGET (87 aa)).

It belongs to the EOLA family. In terms of assembly, interacts with MT2A. Expressed primarily in heart, skeletal muscle, kidney, liver and placenta. Relatively high level of expression in spleen, colon and small intestine. Almost no expression in brain, thymus, lung and peripheral blood leukocytes. Expressed in epithelial cells (at protein level).

May play a role in cell protection during the inflammatory response. In epithelial cells, negatively regulates IL6 production and apoptosis through the regulation of MT2A expression. The sequence is that of Protein EOLA1 from Homo sapiens (Human).